We begin with the raw amino-acid sequence, 1392 residues long: DNA-directed RNA polymerase subunit beta'' (1392 aa).

Cysteine 224, cysteine 295, cysteine 302, and cysteine 305 together coordinate Zn(2+).

This sequence belongs to the RNA polymerase beta' chain family. RpoC2 subfamily. In terms of assembly, in plastids the minimal PEP RNA polymerase catalytic core is composed of four subunits: alpha, beta, beta', and beta''. When a (nuclear-encoded) sigma factor is associated with the core the holoenzyme is formed, which can initiate transcription. Requires Zn(2+) as cofactor.

The protein localises to the plastid. Its subcellular location is the chloroplast. It carries out the reaction RNA(n) + a ribonucleoside 5'-triphosphate = RNA(n+1) + diphosphate. Functionally, DNA-dependent RNA polymerase catalyzes the transcription of DNA into RNA using the four ribonucleoside triphosphates as substrates. The sequence is that of DNA-directed RNA polymerase subunit beta'' from Nicotiana tomentosiformis (Tobacco).